A 201-amino-acid polypeptide reads, in one-letter code: Urease accessory protein UreG (201 aa).

11 to 18 (GPVGSGKT) provides a ligand contact to GTP.

It belongs to the SIMIBI class G3E GTPase family. UreG subfamily. In terms of assembly, homodimer. UreD, UreF and UreG form a complex that acts as a GTP-hydrolysis-dependent molecular chaperone, activating the urease apoprotein by helping to assemble the nickel containing metallocenter of UreC. The UreE protein probably delivers the nickel.

The protein localises to the cytoplasm. In terms of biological role, facilitates the functional incorporation of the urease nickel metallocenter. This process requires GTP hydrolysis, probably effectuated by UreG. This Prochlorococcus marinus subsp. pastoris (strain CCMP1986 / NIES-2087 / MED4) protein is Urease accessory protein UreG.